We begin with the raw amino-acid sequence, 241 residues long: Uridylate kinase (241 aa).

An ATP-binding site is contributed by 15-18 (KLSG). An involved in allosteric activation by GTP region spans residues 23 to 28 (GAEGFG). Gly57 is a binding site for UMP. Residues Gly58 and Arg62 each coordinate ATP. UMP-binding positions include Asp77 and 138-145 (TGNPFFTT). Residues Thr165, Phe171, and Asp174 each coordinate ATP.

This sequence belongs to the UMP kinase family. In terms of assembly, homohexamer.

It is found in the cytoplasm. The enzyme catalyses UMP + ATP = UDP + ADP. Its pathway is pyrimidine metabolism; CTP biosynthesis via de novo pathway; UDP from UMP (UMPK route): step 1/1. Allosterically activated by GTP. Inhibited by UTP. Catalyzes the reversible phosphorylation of UMP to UDP. This chain is Uridylate kinase, found in Sodalis glossinidius (strain morsitans).